A 597-amino-acid chain; its full sequence is Elongation factor 4 (597 aa).

A tr-type G domain is found at 2 to 184; it reads QHIRNFSIIA…TIVARVPAPQ (183 aa). GTP contacts are provided by residues 14 to 19 and 131 to 134; these read DHGKST and NKMD.

The protein belongs to the TRAFAC class translation factor GTPase superfamily. Classic translation factor GTPase family. LepA subfamily.

The protein resides in the cell inner membrane. It catalyses the reaction GTP + H2O = GDP + phosphate + H(+). In terms of biological role, required for accurate and efficient protein synthesis under certain stress conditions. May act as a fidelity factor of the translation reaction, by catalyzing a one-codon backward translocation of tRNAs on improperly translocated ribosomes. Back-translocation proceeds from a post-translocation (POST) complex to a pre-translocation (PRE) complex, thus giving elongation factor G a second chance to translocate the tRNAs correctly. Binds to ribosomes in a GTP-dependent manner. The protein is Elongation factor 4 of Bordetella petrii (strain ATCC BAA-461 / DSM 12804 / CCUG 43448).